The following is a 135-amino-acid chain: MKRLLSWLTGALLMAGLLAGLILPGSVHADEDLVGKYSGNEIRNIADDKIAAREGKVDLNNSSVRRFQQFPGMYPTMAGKIVLGGPYNDVDEVLNLDLSERQIELFNKYKENFTVTPPEIALNEGDDRINDGQYR.

Residues 1–29 form the signal peptide; that stretch reads MKRLLSWLTGALLMAGLLAGLILPGSVHA.

This sequence belongs to the PsbU family. In terms of assembly, PSII is composed of 1 copy each of membrane proteins PsbA, PsbB, PsbC, PsbD, PsbE, PsbF, PsbH, PsbI, PsbJ, PsbK, PsbL, PsbM, PsbT, PsbX, PsbY, Psb30/Ycf12, peripheral proteins PsbO, CyanoQ (PsbQ), PsbU, PsbV and a large number of cofactors. It forms dimeric complexes.

The protein resides in the cellular thylakoid membrane. One of the extrinsic, lumenal subunits of photosystem II (PSII). PSII is a light-driven water plastoquinone oxidoreductase, using light energy to abstract electrons from H(2)O, generating a proton gradient subsequently used for ATP formation. The extrinsic proteins stabilize the structure of photosystem II oxygen-evolving complex (OEC), the ion environment of oxygen evolution and protect the OEC against heat-induced inactivation. The chain is Photosystem II extrinsic protein U from Parasynechococcus marenigrum (strain WH8102).